The chain runs to 445 residues: MSKKLYIKTYGCQMNVYDSVKMQDLLYPFGYEPTENIEDADVIILITCHIREKAAEKTYSELGRIKKLQDTRKKQGLNSAIIVVAGCVAQAEGEEIFSRAPYVDIVVGPQSYYNLPELISKVVRHEKHLIDLDFVEEAKFDNLPEQLYPQGASSFISVQEGCDKFCTFCVVPYTRGAEFSRNVEQVYREALKVVSSGAKEITLLGQNVNAYHGKGPDDKIFTLADLLGHLAQIPNLERLRYMTSHPIDMTDDLIKLHGTEPKLMPFLHLPVQSGSNKILKAMNRKHDRDYYFDIINRLRETRPDIVLSSDFIVGFPGETDEDFEDTLDLVRRVKYGQCYSFKYSPRPGTPGATRTDQVPEHIKSERLTILQQELTAQQLAFNESCVGSIMKVLFDRNGKFDDQIIGKTPYMQSVYIQNPNKSLLGKITDVKITKAASNSLTGEVI.

In terms of domain architecture, MTTase N-terminal spans 3-124 (KKLYIKTYGC…LPELISKVVR (122 aa)). [4Fe-4S] cluster is bound by residues cysteine 12, cysteine 48, cysteine 87, cysteine 162, cysteine 166, and cysteine 169. A Radical SAM core domain is found at 148–380 (YPQGASSFIS…QQELTAQQLA (233 aa)). The region spanning 383–445 (ESCVGSIMKV…ASNSLTGEVI (63 aa)) is the TRAM domain.

The protein belongs to the methylthiotransferase family. MiaB subfamily. Monomer. Requires [4Fe-4S] cluster as cofactor.

It localises to the cytoplasm. The enzyme catalyses N(6)-dimethylallyladenosine(37) in tRNA + (sulfur carrier)-SH + AH2 + 2 S-adenosyl-L-methionine = 2-methylsulfanyl-N(6)-dimethylallyladenosine(37) in tRNA + (sulfur carrier)-H + 5'-deoxyadenosine + L-methionine + A + S-adenosyl-L-homocysteine + 2 H(+). Functionally, catalyzes the methylthiolation of N6-(dimethylallyl)adenosine (i(6)A), leading to the formation of 2-methylthio-N6-(dimethylallyl)adenosine (ms(2)i(6)A) at position 37 in tRNAs that read codons beginning with uridine. This is tRNA-2-methylthio-N(6)-dimethylallyladenosine synthase from Rickettsia felis (strain ATCC VR-1525 / URRWXCal2) (Rickettsia azadi).